The following is a 211-amino-acid chain: Thymidylate kinase (211 aa).

10–17 (GPDGAGKT) provides a ligand contact to ATP.

It belongs to the thymidylate kinase family.

The enzyme catalyses dTMP + ATP = dTDP + ADP. Functionally, phosphorylation of dTMP to form dTDP in both de novo and salvage pathways of dTTP synthesis. This chain is Thymidylate kinase, found in Lactococcus lactis subsp. cremoris (strain MG1363).